Here is a 302-residue protein sequence, read N- to C-terminus: UDP-N-acetylenolpyruvoylglucosamine reductase (302 aa).

The 164-residue stretch at 29-192 (KVGGPVDLLA…VAVTLQLSED (164 aa)) folds into the FAD-binding PCMH-type domain. Arg172 is a catalytic residue. Ser221 acts as the Proton donor in catalysis. Glu291 is an active-site residue.

Belongs to the MurB family. FAD serves as cofactor.

The protein resides in the cytoplasm. It carries out the reaction UDP-N-acetyl-alpha-D-muramate + NADP(+) = UDP-N-acetyl-3-O-(1-carboxyvinyl)-alpha-D-glucosamine + NADPH + H(+). It participates in cell wall biogenesis; peptidoglycan biosynthesis. Functionally, cell wall formation. In Trichlorobacter lovleyi (strain ATCC BAA-1151 / DSM 17278 / SZ) (Geobacter lovleyi), this protein is UDP-N-acetylenolpyruvoylglucosamine reductase.